The sequence spans 258 residues: Hydroxyacylglutathione hydrolase (258 aa).

The Zn(2+) site is built by histidine 54, histidine 56, aspartate 58, histidine 59, histidine 113, aspartate 138, and histidine 176.

It belongs to the metallo-beta-lactamase superfamily. Glyoxalase II family. As to quaternary structure, monomer. Zn(2+) is required as a cofactor.

It carries out the reaction an S-(2-hydroxyacyl)glutathione + H2O = a 2-hydroxy carboxylate + glutathione + H(+). It functions in the pathway secondary metabolite metabolism; methylglyoxal degradation; (R)-lactate from methylglyoxal: step 2/2. Thiolesterase that catalyzes the hydrolysis of S-D-lactoyl-glutathione to form glutathione and D-lactic acid. This is Hydroxyacylglutathione hydrolase from Synechococcus sp. (strain ATCC 27144 / PCC 6301 / SAUG 1402/1) (Anacystis nidulans).